Here is a 189-residue protein sequence, read N- to C-terminus: Ion-translocating oxidoreductase complex subunit B (189 aa).

A hydrophobic region spans residues 1–26; it reads MSAVMIAVVLLGLLALVFGAILGFAA. A 4Fe-4S domain is found at 32–90; the sequence is EGDPLVDQVESLLPQTQCGQCGYPGCRPYAEAIAGGDQINKCPPGGTATMEKIAELMGV. Residues C49, C52, C57, C73, C114, C117, C120, C124, C144, C147, C150, and C154 each contribute to the [4Fe-4S] cluster site. 2 consecutive 4Fe-4S ferredoxin-type domains span residues 105-134 and 136-164; these read KVAY…GAGK and MHTV…MLPV.

This sequence belongs to the 4Fe4S bacterial-type ferredoxin family. RnfB subfamily. As to quaternary structure, the complex is composed of six subunits: RnfA, RnfB, RnfC, RnfD, RnfE and RnfG. Requires [4Fe-4S] cluster as cofactor.

It localises to the cell inner membrane. Part of a membrane-bound complex that couples electron transfer with translocation of ions across the membrane. The polypeptide is Ion-translocating oxidoreductase complex subunit B (Shewanella amazonensis (strain ATCC BAA-1098 / SB2B)).